The chain runs to 553 residues: Putative transport protein YidE (553 aa).

5 helical membrane-spanning segments follow: residues 4–24 (IALT…IGNI), 28–48 (GVGF…HFVD), 65–85 (FGLI…FFAS), 95–115 (LFAV…HKIF), and 158–178 (MSYA…MWLM). 2 RCK C-terminal domains span residues 192 to 276 (KHES…VIGK) and 279 to 361 (DTSL…VVGN). Helical transmembrane passes span 371–391 (MLPV…PLFV), 403–425 (AGGP…LYWF), 437–457 (LGIV…FVNT), 464–484 (LSWI…VGLL), and 533–553 (LVMF…WGIG).

Belongs to the AAE transporter (TC 2.A.81) family. YidE subfamily.

It is found in the cell membrane. The polypeptide is Putative transport protein YidE (Salmonella arizonae (strain ATCC BAA-731 / CDC346-86 / RSK2980)).